A 198-amino-acid polypeptide reads, in one-letter code: Transcription antitermination protein NusB (198 aa).

The protein belongs to the NusB family.

In terms of biological role, involved in transcription antitermination. Required for transcription of ribosomal RNA (rRNA) genes. Binds specifically to the boxA antiterminator sequence of the ribosomal RNA (rrn) operons. The sequence is that of Transcription antitermination protein NusB from Methylococcus capsulatus (strain ATCC 33009 / NCIMB 11132 / Bath).